We begin with the raw amino-acid sequence, 267 residues long: Cerberus (267 aa).

A signal peptide spans 1–17 (MHLLLFQLLVLLPLGKT). Disordered stretches follow at residues 19 to 52 (RHQD…EAEE) and 87 to 113 (WKKP…QSLI). Asn26 carries an N-linked (GlcNAc...) asparagine glycan. Over residues 88–101 (KKPEREMHPSRDSD) the composition is skewed to basic and acidic residues. Intrachain disulfides connect Cys162/Cys209, Cys176/Cys223, Cys186/Cys239, and Cys190/Cys241. The region spanning 162 to 246 (CRTVPFSQTI…EECQCKVKTE (85 aa)) is the CTCK domain. Asn222 carries N-linked (GlcNAc...) asparagine glycosylation.

This sequence belongs to the DAN family. As to quaternary structure, forms monomers and predominantly dimers. Post-translationally, N-glycosylated.

The protein localises to the secreted. Cytokine that may play a role in anterior neural induction and somite formation during embryogenesis in part through a BMP-inhibitory mechanism. Can regulate Nodal signaling during gastrulation as well as the formation and patterning of the primitive streak. This Homo sapiens (Human) protein is Cerberus (CER1).